The chain runs to 889 residues: Cytoplasmic aconitate hydratase (889 aa).

Substrate is bound by residues Gln86 and 205–207 (DSH). The [4Fe-4S] cluster site is built by Cys437, Cys503, and Cys506. Substrate is bound by residues Arg536, Arg541, Arg699, and 779–780 (SR).

The protein belongs to the aconitase/IPM isomerase family. As to quaternary structure, interacts (when associated with the 4Fe-4S) with FBXL5. Interacts with frataxin(81-210). [4Fe-4S] cluster serves as cofactor.

It is found in the cytoplasm. The protein resides in the cytosol. The catalysed reaction is citrate = D-threo-isocitrate. Bifunctional iron sensor that switches between 2 activities depending on iron availability. Iron deprivation, promotes its mRNA binding activity through which it regulates the expression of genes involved in iron uptake, sequestration and utilization. Binds to iron-responsive elements (IRES) in the untranslated region of target mRNAs preventing for instance the translation of ferritin and aminolevulinic acid synthase and stabilizing the transferrin receptor mRNA. In terms of biological role, conversely, when cellular iron levels are high, binds a 4Fe-4S cluster which precludes RNA binding activity and promotes the aconitase activity, the isomerization of citrate to isocitrate via cis-aconitate. This Rattus norvegicus (Rat) protein is Cytoplasmic aconitate hydratase (Aco1).